A 300-amino-acid polypeptide reads, in one-letter code: Porphobilinogen deaminase (300 aa).

At C239 the chain carries S-(dipyrrolylmethanemethyl)cysteine.

The protein belongs to the HMBS family. In terms of assembly, monomer. Dipyrromethane is required as a cofactor.

It catalyses the reaction 4 porphobilinogen + H2O = hydroxymethylbilane + 4 NH4(+). It participates in porphyrin-containing compound metabolism; protoporphyrin-IX biosynthesis; coproporphyrinogen-III from 5-aminolevulinate: step 2/4. In terms of biological role, tetrapolymerization of the monopyrrole PBG into the hydroxymethylbilane pre-uroporphyrinogen in several discrete steps. This is Porphobilinogen deaminase from Francisella tularensis subsp. holarctica (strain OSU18).